Reading from the N-terminus, the 369-residue chain is Flagellar P-ring protein (369 aa).

Positions 1-22 (MLNFKHLMAAALLLSTSLGVQA) are cleaved as a signal peptide.

It belongs to the FlgI family. In terms of assembly, the basal body constitutes a major portion of the flagellar organelle and consists of four rings (L,P,S, and M) mounted on a central rod.

The protein resides in the periplasm. Its subcellular location is the bacterial flagellum basal body. Its function is as follows. Assembles around the rod to form the L-ring and probably protects the motor/basal body from shearing forces during rotation. The polypeptide is Flagellar P-ring protein (Pseudomonas fluorescens (strain ATCC BAA-477 / NRRL B-23932 / Pf-5)).